Reading from the N-terminus, the 743-residue chain is Envelope glycoprotein H (743 aa).

The signal sequence occupies residues 1-23 (MRPGLPPYLTVFTVYLLSHLPSQ). Residues 24-720 (RYGADAASEA…VVDATDSRLL (697 aa)) lie on the Virion surface side of the membrane. 4 N-linked (GlcNAc...) asparagine; by host glycosylation sites follow: Asn56, Asn63, Asn68, and Asn193. The tract at residues 218–281 (YLMDELRYVK…QTEKHELLVL (64 aa)) is interaction with gL. Asn642 and Asn701 each carry an N-linked (GlcNAc...) asparagine; by host glycan. The helical transmembrane segment at 721-741 (MMSVYALSAIIGIYLLYRMLK) threads the bilayer. At 742 to 743 (TC) the chain is on the intravirion side.

It belongs to the herpesviridae glycoprotein H family. In terms of assembly, interacts with glycoprotein L (gL); this interaction is necessary for the correct processing and cell surface expression of gH. The heterodimer gH/gL seems to interact with gB trimers during fusion. Forms the envelope pentamer complex (PC) composed of gH, gL, UL128, UL130, and UL131A. The pentamer interacts with host NRP2. Forms the envelope trimer complex composed of gH, gL, and gO. The trimer interacts with host PDGFRA. The trimer also interacts with host EPHA2. Interacts with UL116. In terms of processing, N-glycosylated, O-glycosylated, and sialylated.

The protein localises to the virion membrane. It localises to the host cell membrane. The protein resides in the host endosome membrane. In terms of biological role, the heterodimer glycoprotein H-glycoprotein L is required for the fusion of viral and plasma membranes leading to virus entry into the host cell. Following initial binding to host receptor, membrane fusion is mediated by the fusion machinery composed of gB and the heterodimer gH/gL. May also be involved in the fusion between the virion envelope and the outer nuclear membrane during virion morphogenesis. In human cytomegalovirus, forms two distincts complexes to mediate viral entry, a trimer and a pentamer at the surface of the virion envelope. The gH-gL-gO trimer is required for infection in fibroblasts by interacting with host PDGFRA, and in glioblastoma cells by interacting with host EPHA2. The gH-gL-UL128-UL130-UL131A pentamer is essential for viral entry in epithelial, endothelial and myeloid cells via interaction with host NRP2. The chain is Envelope glycoprotein H from Human cytomegalovirus (strain AD169) (HHV-5).